The following is a 375-amino-acid chain: Dehydrodolichyl diphosphate synthase complex subunit NUS1 (375 aa).

Residues 1 to 28 (MPTMIKKDDKAMEPPNEKPHRKIERDDV) are compositionally biased toward basic and acidic residues. The interval 1-48 (MPTMIKKDDKAMEPPNEKPHRKIERDDVPESSNHIPPPESGVLKGGKV) is disordered. Residues 97-119 (YLFYKFLLVLLYICFGLFRYGQY) traverse the membrane as a helical segment.

The protein belongs to the UPP synthase family. Forms an active dehydrodolichyl diphosphate synthase complex with either SRT1 or RER2. The cofactor is Mg(2+).

Its subcellular location is the endoplasmic reticulum membrane. The protein localises to the lipid droplet. The protein resides in the nucleus membrane. The enzyme catalyses n isopentenyl diphosphate + (2E,6E)-farnesyl diphosphate = a di-trans,poly-cis-polyprenyl diphosphate + n diphosphate. It participates in protein modification; protein glycosylation. In terms of biological role, with SRT1 or RER2, forms the dehydrodolichyl diphosphate synthase (DDS) complex, an essential component of the dolichol monophosphate (Dol-P) biosynthetic machinery. Adds multiple copies of isopentenyl pyrophosphate (IPP) to farnesyl pyrophosphate (FPP) to produce dehydrodolichyl diphosphate (Dedol-PP), a precursor of dolichol which is utilized as a sugar carrier in protein glycosylation in the endoplasmic reticulum (ER). In Saccharomyces cerevisiae (strain ATCC 204508 / S288c) (Baker's yeast), this protein is Dehydrodolichyl diphosphate synthase complex subunit NUS1 (NUS1).